The chain runs to 291 residues: 4-hydroxy-tetrahydrodipicolinate synthase (291 aa).

Thr-45 lines the pyruvate pocket. Tyr-131 functions as the Proton donor/acceptor in the catalytic mechanism. The active-site Schiff-base intermediate with substrate is Lys-159. A pyruvate-binding site is contributed by Ile-202.

It belongs to the DapA family. As to quaternary structure, homotetramer; dimer of dimers.

It is found in the cytoplasm. It carries out the reaction L-aspartate 4-semialdehyde + pyruvate = (2S,4S)-4-hydroxy-2,3,4,5-tetrahydrodipicolinate + H2O + H(+). It participates in amino-acid biosynthesis; L-lysine biosynthesis via DAP pathway; (S)-tetrahydrodipicolinate from L-aspartate: step 3/4. Catalyzes the condensation of (S)-aspartate-beta-semialdehyde [(S)-ASA] and pyruvate to 4-hydroxy-tetrahydrodipicolinate (HTPA). The polypeptide is 4-hydroxy-tetrahydrodipicolinate synthase (Methanosarcina mazei (strain ATCC BAA-159 / DSM 3647 / Goe1 / Go1 / JCM 11833 / OCM 88) (Methanosarcina frisia)).